Here is a 462-residue protein sequence, read N- to C-terminus: DEK domain-containing chromatin-associated protein 1 (462 aa).

Disordered stretches follow at residues 18-91 and 212-390; these read AVTE…TQGR and KETK…RKEL. Over residues 20–32 the composition is skewed to basic and acidic residues; it reads TEKDTETKKKDEV. Residues 33-46 are compositionally biased toward acidic residues; that stretch reads EKDEAMEEKGEEID. A compositionally biased stretch (polar residues) spans 77–91; sequence PRSSGNKPLSITQGR. Acidic residues predominate over residues 267–276; it reads NGEDDVAPEE. Basic and acidic residues-rich tracts occupy residues 277–303, 312–322, and 347–360; these read ENNK…TDKK, EKPAAEEEKSI, and QKVD…EKGK. The Nuclear localization signal motif lies at 344–351; that stretch reads SKKQKVDK. The region spanning 384 to 439 is the DEK-C domain; sequence EPTRKELHVVVTKILKEVDFNTATLSDILRKLGSHFGIDLMHRKAEVKDIITDAIN. 2 consecutive DNA-binding regions follow at residues 402–416 and 431–435; these read DFNT…RKLG and KDIIT. The disordered stretch occupies residues 438–462; that stretch reads INEMSDDDDEKEEDTEDEGEKEGKD. The span at 441–462 shows a compositional bias: acidic residues; it reads MSDDDDEKEEDTEDEGEKEGKD.

As to quaternary structure, found in a mRNA splicing-dependent exon junction complex (EJC). Binds specifically histones H3 and H4.

Its subcellular location is the nucleus. It is found in the nucleolus. Its function is as follows. Chromatin-associated protein which contributes to the modulation of chromatin structure (such as super-helical structure of DNA) and function. Binds to chromatin of protein-coding genes throughout the genome to regulate nucleosome occupancy and chromatin accessibility, and to modulate the expression of target genes. In Arabidopsis thaliana (Mouse-ear cress), this protein is DEK domain-containing chromatin-associated protein 1.